The sequence spans 395 residues: DDB1- and CUL4-associated factor 4-like protein 2 (395 aa).

WD repeat units follow at residues 268–307 (SHDS…CVTQ) and 312–351 (VNNS…LLTT).

The polypeptide is DDB1- and CUL4-associated factor 4-like protein 2 (DCAF4L2) (Homo sapiens (Human)).